The primary structure comprises 402 residues: Iripin-8 (402 aa).

The signal sequence occupies residues 1 to 16; sequence MTRLLWLFAAITASLA. N-linked (GlcNAc...) asparagine glycans are attached at residues asparagine 164 and asparagine 230.

The protein belongs to the serpin family. As to quaternary structure, interacts with host thrombin/F2. Interacts with host coagulation factor VII/F7 (activated). Interacts with host coagulation factor X/F10 (activated). Interacts with host coagulation factor XII/F12 (activated). Interacts with host coagulation factor IX/F9 (activated). Interacts with host plasmin/PLG. Interacts with host protein C/PROC (activated). Saliva (at protein level). Salivary gland. Midgut. Low-level expression in ovary.

It localises to the secreted. Functionally, serine protease inhibitor that modulates blood feeding of ticks on vertebrate species. Inhibits the intrinsic and common pathways of blood coagulation in the host. Inhibits host thrombin, factor VIIa, factor Xa, factor XIa, factor XIIa, plasmin and activated protein C. Inhibits host trypsin and kallikrein. Reduces host complement activity. Does not affect proliferation of CD4+ T-cells and neutrophil migration. The sequence is that of Iripin-8 from Ixodes ricinus (Common tick).